Reading from the N-terminus, the 428-residue chain is MEQLLLQPIAKVDGEINLPGSKSLSNRALLLAALAQGTTTLTNLLDSDDIRHMLNALKKLGVNYQLSKDKKQCVVEGLGRAFNTAESGLLELFLGNAGTAMRPLCAALCLGQGEYILTGEARMFERPIGSLVDALQQAGAQVTYLENENYPPLKIKGTGLKGGKIKIDGSVSSQFLTAFLMAAPMAMEDTEIEIVGELVSKPYIKITLQIMHDFGIDVDNHNFERFIIKGKQTYSAPGHYLVEGDASSASYFLAAGAIAGGCIKVTGIGKKSVQGDIQFADALEAMGAKIEWGDDYIKASKGELKAIDMDMNHIPDAAMTIAVAALFATGTTKIRNVYNWRVKETDRLYAMATELRKVGATVVEGHDFIEVTAPEKLIHAEIDTYDDHRMAMCFSLVALGNTQVTINDPKCTSKTFPDYFEKLASVSC.

3 residues coordinate 3-phosphoshikimate: K22, S23, and R27. K22 serves as a coordination point for phosphoenolpyruvate. The phosphoenolpyruvate site is built by G98 and R126. 3-phosphoshikimate is bound by residues S172, S173, Q174, S200, D316, N339, and K343. Residue Q174 participates in phosphoenolpyruvate binding. D316 acts as the Proton acceptor in catalysis. The phosphoenolpyruvate site is built by R347, R389, and K414.

The protein belongs to the EPSP synthase family. Monomer.

It localises to the cytoplasm. The enzyme catalyses 3-phosphoshikimate + phosphoenolpyruvate = 5-O-(1-carboxyvinyl)-3-phosphoshikimate + phosphate. It functions in the pathway metabolic intermediate biosynthesis; chorismate biosynthesis; chorismate from D-erythrose 4-phosphate and phosphoenolpyruvate: step 6/7. Functionally, catalyzes the transfer of the enolpyruvyl moiety of phosphoenolpyruvate (PEP) to the 5-hydroxyl of shikimate-3-phosphate (S3P) to produce enolpyruvyl shikimate-3-phosphate and inorganic phosphate. This Psychromonas ingrahamii (strain DSM 17664 / CCUG 51855 / 37) protein is 3-phosphoshikimate 1-carboxyvinyltransferase.